The chain runs to 118 residues: Hydrogenase maturation factor HypA (118 aa).

Histidine 2 is a Ni(2+) binding site. Zn(2+) is bound by residues cysteine 73, cysteine 76, cysteine 90, and cysteine 93.

The protein belongs to the HypA/HybF family.

In terms of biological role, involved in the maturation of [NiFe] hydrogenases. Required for nickel insertion into the metal center of the hydrogenase. The chain is Hydrogenase maturation factor HypA from Salmonella typhi.